Reading from the N-terminus, the 454-residue chain is uncharacterized protein (454 aa).

[4Fe-4S] cluster is bound by residues C73, C79, C82, and C154. S-adenosyl-L-methionine-binding residues include Q279, F307, D328, and D381. C408 acts as the Nucleophile in catalysis.

This sequence belongs to the class I-like SAM-binding methyltransferase superfamily. RNA M5U methyltransferase family.

This is an uncharacterized protein from Leptospira interrogans serogroup Icterohaemorrhagiae serovar copenhageni (strain Fiocruz L1-130).